A 211-amino-acid chain; its full sequence is 7-carboxy-7-deazaguanine synthase (211 aa).

Substrate contacts are provided by residues 22–24 and Arg-37; that span reads LQG. Positions 28–211 constitute a Radical SAM core domain; sequence NTGMPSVFVR…LQTHKLIGIE (184 aa). Positions 41, 45, and 48 each coordinate [4Fe-4S] cluster. Thr-50 is a binding site for Mg(2+). Thr-78 contributes to the substrate binding site. S-adenosyl-L-methionine contacts are provided by residues Gly-80 and 122 to 124; that span reads SPK.

Belongs to the radical SAM superfamily. 7-carboxy-7-deazaguanine synthase family. In terms of assembly, homodimer. [4Fe-4S] cluster serves as cofactor. S-adenosyl-L-methionine is required as a cofactor. It depends on Mg(2+) as a cofactor.

It catalyses the reaction 6-carboxy-5,6,7,8-tetrahydropterin + H(+) = 7-carboxy-7-deazaguanine + NH4(+). Its pathway is purine metabolism; 7-cyano-7-deazaguanine biosynthesis. Its function is as follows. Catalyzes the complex heterocyclic radical-mediated conversion of 6-carboxy-5,6,7,8-tetrahydropterin (CPH4) to 7-carboxy-7-deazaguanine (CDG), a step common to the biosynthetic pathways of all 7-deazapurine-containing compounds. The sequence is that of 7-carboxy-7-deazaguanine synthase from Haemophilus influenzae (strain ATCC 51907 / DSM 11121 / KW20 / Rd).